The sequence spans 354 residues: Guanine nucleotide-binding protein G(o) subunit alpha (354 aa).

The N-myristoyl glycine moiety is linked to residue glycine 2. A lipid anchor (S-palmitoyl cysteine) is attached at cysteine 3. In terms of domain architecture, G-alpha spans 32–354 (KDVKLLLLGA…ANNLRGCGLY (323 aa)). The tract at residues 35 to 48 (KLLLLGAGESGKST) is G1 motif. 9 residues coordinate GTP: glutamate 43, lysine 46, serine 47, threonine 48, serine 152, leucine 176, arginine 177, threonine 178, and arginine 179. Serine 47 is a binding site for Mg(2+). The interval 174–182 (DILRTRVKT) is G2 motif. Threonine 182 contributes to the Mg(2+) binding site. Residues 197 to 206 (FRLFDVGGQR) form a G3 motif region. Position 205 is a 5-glutamyl histamine (glutamine 205). The interval 266 to 273 (ILFLNKKD) is G4 motif. GTP contacts are provided by asparagine 270, aspartate 273, and cysteine 325. The segment at 324 to 329 (TCATDT) is G5 motif. Asparagine 346 is subject to Deamidated asparagine; in form Alpha-3. Cysteine 351 is lipidated: S-palmitoyl cysteine.

The protein belongs to the G-alpha family. G(i/o/t/z) subfamily. As to quaternary structure, g proteins are composed of 3 units; alpha, beta and gamma. The alpha chain contains the guanine nucleotide binding site. Forms a complex with GNB1 and GNG3. Interacts with RGS14. Interacts with RGS16. Interacts with RGS19. Interacts (when palmitoylated) with ADGRG3. In terms of processing, deamidation of Asn-346 converts alpha-1 to alpha-3. Post-translationally, histaminylated at Gln-205 residues by TGM2.

Its subcellular location is the cell membrane. The protein localises to the membrane. The enzyme catalyses GTP + H2O = GDP + phosphate + H(+). Its activity is regulated as follows. The GTPase activity is promoted by GTPAse activators, such as RGS14, RGS16 and RGS19. Guanine nucleotide-binding proteins (G proteins) function as transducers downstream of G protein-coupled receptors (GPCRs) in numerous signaling cascades. The alpha chain contains the guanine nucleotide binding site and alternates between an active, GTP-bound state and an inactive, GDP-bound state. Signaling by an activated GPCR promotes GDP release and GTP binding. The alpha subunit has a low GTPase activity that converts bound GTP to GDP, thereby terminating the signal. Both GDP release and GTP hydrolysis are modulated by numerous regulatory proteins. Signaling is mediated via effector proteins, such as adenylate cyclase. Inhibits adenylate cyclase activity, leading to decreased intracellular cAMP levels. The protein is Guanine nucleotide-binding protein G(o) subunit alpha (GNAO1) of Cricetulus longicaudatus (Long-tailed dwarf hamster).